The sequence spans 116 residues: MAMKIRLARGGSKKRPHYSIVASDSRMPRDGRFLEKLGTYNPLLAKDSEDRIKMNLERVQYWLAQGAQPTDRVARFLEAAGLKEKAVRNNPKAAVPGKRMAELAKKKADRAAASAE.

A disordered region spans residues 88-116 (RNNPKAAVPGKRMAELAKKKADRAAASAE). The span at 99 to 110 (RMAELAKKKADR) shows a compositional bias: basic and acidic residues.

It belongs to the bacterial ribosomal protein bS16 family.

This is Small ribosomal subunit protein bS16 from Cereibacter sphaeroides (strain ATCC 17029 / ATH 2.4.9) (Rhodobacter sphaeroides).